The following is a 513-amino-acid chain: Interferon alpha/beta receptor 2 (513 aa).

A signal peptide spans 1–21; it reads MRSRCTVSAVGLLSLCLVVSA. The Extracellular segment spans residues 22–242; that stretch reads SLETITPSAF…GQESGLSESA (221 aa). 2 disulfides stabilise this stretch: cysteine 39–cysteine 123 and cysteine 85–cysteine 93. Asparagine 42, asparagine 58, asparagine 65, asparagine 78, and asparagine 84 each carry an N-linked (GlcNAc...) asparagine glycan. N-linked (GlcNAc...) asparagine glycans are attached at residues asparagine 149, asparagine 191, and asparagine 195. The cysteines at positions 210 and 227 are disulfide-linked. Residues 243–263 traverse the membrane as a helical segment; the sequence is IVGITTSCLVVMVFVSTIVML. Topologically, residues 264-513 are cytoplasmic; the sequence is KRIGYICLKD…ADVGDGYIMR (250 aa). The segment at 334-402 is disordered; it reads GYTMHGLTGK…DPTGPYERRK (69 aa). Position 335 is a phosphotyrosine (tyrosine 335). The segment covering 344–354 has biased composition (polar residues); it reads PLQQTSDTSAS. Residues 377–389 show a composition bias toward low complexity; that stretch reads GAEPELPTEAGAG. At serine 403 the chain carries Phosphoserine. The mediates interaction with STAT2 (and required for the recruitment of USP18) stretch occupies residues 421 to 444; it reads GDNIIFNVNLNSVFLRVLHDEDAS. Residues serine 448 and serine 465 each carry the phosphoserine modification. A disordered region spans residues 458–513; sequence EGPQRTESDLRIAGGDRTQPPLPSLPSQDLWTEDGSSEKSDTSDSDADVGDGYIMR. A Phosphotyrosine modification is found at tyrosine 510.

It belongs to the type II cytokine receptor family. As to quaternary structure, heterodimer with IFNAR1; forming the receptor for type I interferon. Interacts with the transcriptional factors STAT1 and STAT2. Interacts with JAK1. Interacts with USP18; indirectly via STAT2, it negatively regulates the assembly of the ternary interferon-IFNAR1-IFNAR2 complex and therefore type I interferon signaling. In terms of processing, phosphorylated on tyrosine residues upon interferon binding. Phosphorylation at Tyr-335 or Tyr-510 are sufficient to mediate interferon dependent activation of STAT1, STAT2 and STAT3 leading to antiproliferative effects on many different cell types. As to expression, widely expressed. Detected in liver, testis, kidney, salivary gland, thymus, brain, lung and placenta. Isoform 1, isoform 2 and isoform 3 are expressed in brain.

It localises to the cell membrane. Its subcellular location is the secreted. In terms of biological role, together with IFNAR1, forms the heterodimeric receptor for type I interferons (including interferons alpha, beta, epsilon, omega and kappa). Type I interferon binding activates the JAK-STAT signaling cascade, resulting in transcriptional activation or repression of interferon-regulated genes that encode the effectors of the interferon response. Mechanistically, type I interferon-binding brings the IFNAR1 and IFNAR2 subunits into close proximity with one another, driving their associated Janus kinases (JAKs) (TYK2 bound to IFNAR1 and JAK1 bound to IFNAR2) to cross-phosphorylate one another. The activated kinases phosphorylate specific tyrosine residues on the intracellular domains of IFNAR1 and IFNAR2, forming docking sites for the STAT transcription factors (STAT1, STAT2 and STAT). STAT proteins are then phosphorylated by the JAKs, promoting their translocation into the nucleus to regulate expression of interferon-regulated genes. May be potent inhibitors of type I IFN receptor activity. The polypeptide is Interferon alpha/beta receptor 2 (Ifnar2) (Mus musculus (Mouse)).